The sequence spans 81 residues: Omega-conotoxin-like TxO4 (81 aa).

Residues 1–22 (MKLTCVVIVAVLFLTAWTFVTA) form the signal peptide. A propeptide spanning residues 23–52 (VPHSSNALENLYLKARHEMENPEASKLNTR) is cleaved from the precursor. Disulfide bonds link cysteine 55–cysteine 72, cysteine 62–cysteine 76, and cysteine 71–cysteine 80. Proline 70 bears the 4-hydroxyproline; partial mark. Tryptophan 75 carries the post-translational modification 6'-bromotryptophan; partial.

The protein belongs to the conotoxin O1 superfamily. Post-translationally, txO4 is found with and without hydroxyproline and these two forms have a bromotryptophan. Truncated TxO4 is found with and without bromotryptophan, and these two forms have no hydroxyproline. As to expression, expressed by the venom duct.

It localises to the secreted. Functionally, omega-conotoxins act at presynaptic membranes, they bind and block voltage-gated calcium channels (Cav). The polypeptide is Omega-conotoxin-like TxO4 (Conus textile (Cloth-of-gold cone)).